Consider the following 283-residue polypeptide: MLRIAVQAKGRLFEETMALLEESDIKLSTTKRTLLVQSSNFPVEVLFLRDDDIPQSVATGVADLGIVGENEFVERQEDAEIIKRLGFSKCRLSLAMPKDIEYPGLSWFNGKKIATSYPGILDAFMKSNGVKAEVHVITGSVEVAPGIGLADAIFDIVSSGSTLVSNRLKEVEVVMRSEALLIGNKNMSKEKKEILDELLFRMDAVKTAEDKKYVLMNAPKDKLEDIIAVLPGMKSPTVMPLAQDGWCSVHTVLDEKRFWEIIGKLKALGAEGILVLPIEKMII.

Belongs to the ATP phosphoribosyltransferase family. Long subfamily. It depends on Mg(2+) as a cofactor.

Its subcellular location is the cytoplasm. The catalysed reaction is 1-(5-phospho-beta-D-ribosyl)-ATP + diphosphate = 5-phospho-alpha-D-ribose 1-diphosphate + ATP. It participates in amino-acid biosynthesis; L-histidine biosynthesis; L-histidine from 5-phospho-alpha-D-ribose 1-diphosphate: step 1/9. With respect to regulation, feedback inhibited by histidine. Catalyzes the condensation of ATP and 5-phosphoribose 1-diphosphate to form N'-(5'-phosphoribosyl)-ATP (PR-ATP). Has a crucial role in the pathway because the rate of histidine biosynthesis seems to be controlled primarily by regulation of HisG enzymatic activity. This Bacteroides fragilis (strain ATCC 25285 / DSM 2151 / CCUG 4856 / JCM 11019 / LMG 10263 / NCTC 9343 / Onslow / VPI 2553 / EN-2) protein is ATP phosphoribosyltransferase.